Reading from the N-terminus, the 709-residue chain is UV-stimulated scaffold protein A (709 aa).

Positions 1 to 10 (MDQKLSKLVE) are enriched in basic and acidic residues. A disordered region spans residues 1–20 (MDQKLSKLVEELTTSGEPRL). The interval 2–145 (DQKLSKLVEE…HFLRHNKKVD (144 aa)) is VHS-like. The stretch at 165-199 (KHLDKIYQERASQAEREMQEMSGEIESCLTEVESC) forms a coiled coil. Disordered stretches follow at residues 230–289 (SCAG…DSDL) and 386–406 (EGGE…EDDE). The span at 280 to 289 (PSDEDEDSDL) shows a compositional bias: acidic residues. Residues Ser281 and Ser287 each carry the phosphoserine modification. Residues 386-395 (EGGERRRTEA) are compositionally biased toward basic and acidic residues. Acidic residues predominate over residues 397–406 (GDAEEDEDDE). Lys414 participates in a covalent cross-link: Glycyl lysine isopeptide (Lys-Gly) (interchain with G-Cter in ubiquitin). The disordered stretch occupies residues 469–495 (DHLPPPSSASPSRALPEPQEAQKLAAE). Positions 477-486 (ASPSRALPEP) are enriched in low complexity. The segment at 564 to 591 (QHWCRAPRPDGRLCERQDRLKCPFHGKI) adopts a UVSSA-type zinc-finger fold. Residues Cys567, Cys577, Cys585, and His588 each contribute to the Zn(2+) site. A disordered region spans residues 588–655 (HGKIVPRDDE…GKGRGKKRRY (68 aa)). The segment covering 592-632 (VPRDDEGRPLDPEDRAREQRRQLQKQERPEWQDPELMRDVE) has biased composition (basic and acidic residues). Positions 646–655 (GKGRGKKRRY) are enriched in basic residues.

Belongs to the UVSSA family. Interacts with the elongating form of RNA polymerase II (RNA pol IIo) during transcription stress. Interacts with the TFIIH complex during transcription stress. Interacts with ERCC6. Interacts with ERCC8. Interacts with USP7. Monoubiquitinated at Lys-414 in response to transcription stress; this promotes efficient transfer of TFIIH to stalled RNA polymerase II.

The protein resides in the chromosome. Its function is as follows. Factor involved in transcription-coupled nucleotide excision repair (TC-NER), a mechanism that rapidly removes RNA polymerase II-blocking lesions from the transcribed strand of active genes. Acts as a key adapter that promotes recruitment of factors involved in TC-NER. Facilitates the ubiquitination of the elongating form of RNA polymerase II (RNA pol IIo) at DNA damage sites, thereby promoting RNA pol IIo backtracking and access by the TC-NER machinery to lesion sites. Also promotes stabilization of ERCC6/CSB by recruiting deubiquitinating enzyme USP7 to TC-NER complexes, preventing UV-induced degradation of ERCC6 by the proteasome. Mediates the recruitment of the TFIIH complex and other factors that are required for nucleotide excision repair to RNA polymerase II. Also required to inactivate stalled RNA polymerase II by blocking the access of TCEA1/TFIIS, thereby preventing reactivation of RNA polymerase II. Not involved in processing oxidative damage. The chain is UV-stimulated scaffold protein A from Homo sapiens (Human).